Reading from the N-terminus, the 468-residue chain is Purple acid phosphatase 10 (468 aa).

A signal peptide spans 1-25 (MGRVRKSDFGSIVLVLCCVLNSLLC). N-linked (GlcNAc...) asparagine glycosylation is found at asparagine 95 and asparagine 113. Fe cation is bound at residue aspartate 167. A glycan (N-linked (GlcNAc...) asparagine) is linked at asparagine 175. Residues aspartate 196 and tyrosine 199 each contribute to the Fe cation site. Residue aspartate 196 coordinates Zn(2+). Asparagine 233 serves as a coordination point for Zn(2+). Asparagine 233 is a substrate binding site. Asparagine 306 carries an N-linked (GlcNAc...) asparagine glycan. Histidine 318 lines the Zn(2+) pocket. Histidine 328 serves as the catalytic Proton donor. Histidine 355 lines the Zn(2+) pocket. Position 355–357 (355–357 (HVH)) interacts with substrate. Histidine 357 provides a ligand contact to Fe cation. N-linked (GlcNAc...) asparagine glycosylation occurs at asparagine 428.

This sequence belongs to the metallophosphoesterase superfamily. Purple acid phosphatase family. In terms of assembly, homodimer; disulfide-linked. Fe cation serves as cofactor. It depends on Zn(2+) as a cofactor. In terms of tissue distribution, expressed in roots, stems, leaves, flowers and siliques.

It localises to the secreted. The protein localises to the cytoplasm. It catalyses the reaction a phosphate monoester + H2O = an alcohol + phosphate. The chain is Purple acid phosphatase 10 (PAP10) from Arabidopsis thaliana (Mouse-ear cress).